Consider the following 150-residue polypeptide: Submaxillary gland androgen-regulated protein 2, isoform alpha (150 aa).

A signal peptide spans Met-1 to Cys-22.

Its subcellular location is the secreted. Functionally, may play a role in protection or detoxification. The protein is Submaxillary gland androgen-regulated protein 2, isoform alpha (Smr2) of Mus musculus (Mouse).